We begin with the raw amino-acid sequence, 352 residues long: Protein-glutamate methylesterase/protein-glutamine glutaminase 2 (352 aa).

In terms of domain architecture, Response regulatory spans 1–116 (MIVDDSAIVR…KDFIQDAASD (116 aa)). At Asp50 the chain carries 4-aspartylphosphate. A CheB-type methylesterase domain is found at 159–351 (SKTTEHVVAI…QEIMRYAHLK (193 aa)). Residues Ser171, His197, and Asp293 contribute to the active site.

This sequence belongs to the CheB family. Post-translationally, phosphorylated by CheA. Phosphorylation of the N-terminal regulatory domain activates the methylesterase activity.

The protein localises to the cytoplasm. It catalyses the reaction [protein]-L-glutamate 5-O-methyl ester + H2O = L-glutamyl-[protein] + methanol + H(+). It carries out the reaction L-glutaminyl-[protein] + H2O = L-glutamyl-[protein] + NH4(+). Involved in chemotaxis. Part of a chemotaxis signal transduction system that modulates chemotaxis in response to various stimuli. Catalyzes the demethylation of specific methylglutamate residues introduced into the chemoreceptors (methyl-accepting chemotaxis proteins or MCP) by CheR. Also mediates the irreversible deamidation of specific glutamine residues to glutamic acid. This is Protein-glutamate methylesterase/protein-glutamine glutaminase 2 from Shewanella denitrificans (strain OS217 / ATCC BAA-1090 / DSM 15013).